We begin with the raw amino-acid sequence, 193 residues long: Spermatogenesis-associated protein 3 (193 aa).

Basic residues predominate over residues 1–16; that stretch reads MKKVKKKKSDSRRRRN. Positions 1 to 92 are disordered; sequence MKKVKKKKSD…SPFLVPMEPK (92 aa). Residues 17 to 35 show a composition bias toward low complexity; it reads SISPQTSSDSSQQPSSETP. Residues 36 to 48 show a composition bias toward pro residues; it reads PSCPEPASPPSKP.

In terms of tissue distribution, strongly expressed in testis. Faintly expressed in epididymis, ovary, spleen, kidney, lung, heart, brain, epididymis, liver and skeletal muscle.

It localises to the cell projection. The protein localises to the cilium. It is found in the flagellum. This Mus musculus (Mouse) protein is Spermatogenesis-associated protein 3 (Spata3).